The sequence spans 316 residues: MTQGKLSVANKAPGTEGQQQANGEKKDAPAVPSAPPSYEEATSGEGLKAGAFPQGPTAVPLHPSWAYVDPSSSSGYEGGFPAGHHELFSTFSWDDQKVRQLFIRKVYTILLVQLLVTLAVVALFTFCDVVKDYVQANPGWYWASYAVFFATYLTLACCSGPRRHFPWNLILLTIFTLSMAYLTGMLSSYYNTTSVLLCLGITALVCLSVTIFSFQTKFDFTSCHGVLFVLLMTLFFSGLLLAILLPFQYVPWLHAVYAVLGAGVFTLFLAFDTQLLMGNRRHSLSPEEYIFGALNIYLDIIYIFTFFLQLFGTNRE.

The disordered stretch occupies residues 1–49 (MTQGKLSVANKAPGTEGQQQANGEKKDAPAVPSAPPSYEEATSGEGLKA). The next 3 membrane-spanning stretches (helical) occupy residues 106-126 (VYTI…LFTF), 138-158 (PGWY…LACC), and 165-185 (FPWN…LTGM). Asparagine 191 is a glycosylation site (N-linked (GlcNAc...) asparagine). 4 consecutive transmembrane segments (helical) span residues 194-214 (SVLL…IFSF), 225-245 (GVLF…AILL), 251-271 (PWLH…FLAF), and 290-310 (IFGA…FLQL).

Belongs to the BI1 family. LFG subfamily. As to quaternary structure, interacts with FAS/TNFRSF6 and BAX. In terms of tissue distribution, expressed at high levels on dendrites and to a lesser extent on the soma and axons of neurons in various regions of brain.

The protein localises to the cell membrane. The protein resides in the membrane raft. Its subcellular location is the postsynaptic cell membrane. In terms of biological role, antiapoptotic protein which protects cells uniquely from Fas-induced apoptosis. Regulates Fas-mediated apoptosis in neurons by interfering with caspase-8 activation. Plays a role in cerebellar development by affecting cerebellar size, internal granular layer (IGL) thickness, and Purkinje cell (PC) development. The sequence is that of Protein lifeguard 2 (Faim2) from Rattus norvegicus (Rat).